A 59-amino-acid polypeptide reads, in one-letter code: Potassium channel toxin alpha-KTx 4.7 (59 aa).

The first 22 residues, methionine 1–glutamine 22, serve as a signal peptide directing secretion. Disulfide bonds link cysteine 29-cysteine 50, cysteine 35-cysteine 55, and cysteine 39-cysteine 57. The tract at residues glycine 48–cysteine 55 is interaction with Ca(2+)-activated K(+) channels.

It belongs to the short scorpion toxin superfamily. Potassium channel inhibitor family. Alpha-KTx 04 subfamily. In terms of tissue distribution, expressed by the venom gland.

It localises to the secreted. Functionally, potently blocks Kv1.1/KCNA1 (85%), Kv1.2/KCNA2 (91%), Kv1.3/KCNA3 (89%), Kv1.6/KCNA6 (94%), and Shaker (97%). The chain is Potassium channel toxin alpha-KTx 4.7 from Tityus stigmurus (Brazilian scorpion).